The sequence spans 200 residues: Probable GTP-binding protein EngB (200 aa).

The EngB-type G domain occupies 22–197 (DLPEIAFAGR…WQAIQDAVEE (176 aa)). GTP-binding positions include 30–37 (GRSNVGKS), 57–61 (GRTQL), 78–81 (DLPG), 145–148 (TKCD), and 176–178 (FSA). Ser37 and Thr59 together coordinate Mg(2+).

The protein belongs to the TRAFAC class TrmE-Era-EngA-EngB-Septin-like GTPase superfamily. EngB GTPase family. Mg(2+) is required as a cofactor.

Its function is as follows. Necessary for normal cell division and for the maintenance of normal septation. This is Probable GTP-binding protein EngB from Trichlorobacter lovleyi (strain ATCC BAA-1151 / DSM 17278 / SZ) (Geobacter lovleyi).